The primary structure comprises 199 residues: Casparian strip membrane protein 2 (199 aa).

Over Met1–Gly37 the chain is Cytoplasmic. A helical transmembrane segment spans residues Ile38 to Ala58. Residues Ser59–Gln87 lie on the Extracellular side of the membrane. The helical transmembrane segment at Phe88–Ile108 threads the bilayer. Over Val109 to Arg120 the chain is Cytoplasmic. A helical membrane pass occupies residues Leu121–Ala141. The Extracellular portion of the chain corresponds to Ala142–Gly173. An N-linked (GlcNAc...) asparagine glycan is attached at Asn152. The chain crosses the membrane as a helical span at residues Ala174–Phe194. The Cytoplasmic portion of the chain corresponds to Ala195–His199.

It belongs to the Casparian strip membrane proteins (CASP) family. As to quaternary structure, homodimer and heterodimers.

It is found in the cell membrane. Regulates membrane-cell wall junctions and localized cell wall deposition. Required for establishment of the Casparian strip membrane domain (CSD) and the subsequent formation of Casparian strips, a cell wall modification of the root endodermis that determines an apoplastic barrier between the intraorganismal apoplasm and the extraorganismal apoplasm and prevents lateral diffusion. The chain is Casparian strip membrane protein 2 from Populus trichocarpa (Western balsam poplar).